The sequence spans 1295 residues: Phosphoribosylformylglycinamidine synthase (1295 aa).

A disordered region spans residues 305–327 (WPGAATGSGGEIRDEGATGRGAK). ATP-binding positions include 307 to 318 (GAATGSGGEIRD), 386 to 388 (TGY), and Ala-678. Mg(2+)-binding residues include Asp-679, Glu-718, Asn-722, and Asp-884. Ser-886 contacts ATP. Positions 1042–1295 (VAVLREQGVN…IFRNARKQLG (254 aa)) constitute a Glutamine amidotransferase type-1 domain. Residue Cys-1135 is the Nucleophile of the active site. Residues His-1260 and Glu-1262 contribute to the active site.

The protein in the N-terminal section; belongs to the FGAMS family. As to quaternary structure, monomer.

It is found in the cytoplasm. It carries out the reaction N(2)-formyl-N(1)-(5-phospho-beta-D-ribosyl)glycinamide + L-glutamine + ATP + H2O = 2-formamido-N(1)-(5-O-phospho-beta-D-ribosyl)acetamidine + L-glutamate + ADP + phosphate + H(+). It functions in the pathway purine metabolism; IMP biosynthesis via de novo pathway; 5-amino-1-(5-phospho-D-ribosyl)imidazole from N(2)-formyl-N(1)-(5-phospho-D-ribosyl)glycinamide: step 1/2. Functionally, phosphoribosylformylglycinamidine synthase involved in the purines biosynthetic pathway. Catalyzes the ATP-dependent conversion of formylglycinamide ribonucleotide (FGAR) and glutamine to yield formylglycinamidine ribonucleotide (FGAM) and glutamate. The polypeptide is Phosphoribosylformylglycinamidine synthase (Salmonella typhi).